Here is a 160-residue protein sequence, read N- to C-terminus: N-acetyltransferase Pat (160 aa).

The N-acetyltransferase domain occupies 5–148; it reads IKIRKATKED…VYGEMRLTER (144 aa). Positions 79, 81, 87, 89, 91, 92, 118, 123, and 127 each coordinate CoA.

Belongs to the acetyltransferase family. GNAT subfamily.

It catalyses the reaction L-lysyl-[protein] + acetyl-CoA = N(6)-acetyl-L-lysyl-[protein] + CoA + H(+). Modulates activity of albA1, the major archaeal DNA compaction protein, by decreasing albA1's nucleic acid binding affinity through acetylation of 'Lys-16'. The polypeptide is N-acetyltransferase Pat (Saccharolobus solfataricus (strain ATCC 35092 / DSM 1617 / JCM 11322 / P2) (Sulfolobus solfataricus)).